We begin with the raw amino-acid sequence, 234 residues long: Ubiquinone biosynthesis O-methyltransferase (234 aa).

Residues Arg36, Gly56, Asp77, and Met125 each coordinate S-adenosyl-L-methionine.

This sequence belongs to the methyltransferase superfamily. UbiG/COQ3 family.

It catalyses the reaction a 3-demethylubiquinol + S-adenosyl-L-methionine = a ubiquinol + S-adenosyl-L-homocysteine + H(+). It carries out the reaction a 3-(all-trans-polyprenyl)benzene-1,2-diol + S-adenosyl-L-methionine = a 2-methoxy-6-(all-trans-polyprenyl)phenol + S-adenosyl-L-homocysteine + H(+). It participates in cofactor biosynthesis; ubiquinone biosynthesis. O-methyltransferase that catalyzes the 2 O-methylation steps in the ubiquinone biosynthetic pathway. The protein is Ubiquinone biosynthesis O-methyltransferase of Actinobacillus pleuropneumoniae serotype 7 (strain AP76).